The chain runs to 439 residues: Paraneoplastic antigen-like protein 8A (439 aa).

A disordered region spans residues 213 to 439 (ETPNNWNATE…RRATNESRKV (227 aa)). Residues 231 to 249 (LVRRAGAKSRSRRKKQKKN) show a composition bias toward basic residues. Over residues 403 to 419 (KAPQGQQPAEATASTSR) the composition is skewed to polar residues. The segment covering 423–439 (AKPEGSPRRATNESRKV) has biased composition (basic and acidic residues).

The protein belongs to the PNMA family.

The sequence is that of Paraneoplastic antigen-like protein 8A (PNMA8A) from Pongo abelii (Sumatran orangutan).